The chain runs to 109 residues: Thiosulfate sulfurtransferase GlpE (109 aa).

Residues 16 to 104 form the Rhodanese domain; the sequence is RSNGAVVVDI…WRATFPSETA (89 aa). C64 (cysteine persulfide intermediate) is an active-site residue.

This sequence belongs to the GlpE family.

It localises to the cytoplasm. The catalysed reaction is thiosulfate + hydrogen cyanide = thiocyanate + sulfite + 2 H(+). The enzyme catalyses thiosulfate + [thioredoxin]-dithiol = [thioredoxin]-disulfide + hydrogen sulfide + sulfite + 2 H(+). In terms of biological role, transferase that catalyzes the transfer of sulfur from thiosulfate to thiophilic acceptors such as cyanide or dithiols. May function in a CysM-independent thiosulfate assimilation pathway by catalyzing the conversion of thiosulfate to sulfite, which can then be used for L-cysteine biosynthesis. The polypeptide is Thiosulfate sulfurtransferase GlpE (Ectopseudomonas mendocina (strain ymp) (Pseudomonas mendocina)).